Reading from the N-terminus, the 346-residue chain is Flap endonuclease 1 (346 aa).

Residues 1–102 (MGVTELGKLI…LEIEQRKKAK (102 aa)) form an N-domain region. Mg(2+)-binding residues include D31, D84, E156, E158, D177, D179, and D239. Residues 120 to 261 (DVAKYAKRAI…KALKLIWEFG (142 aa)) form an I-domain region.

This sequence belongs to the XPG/RAD2 endonuclease family. FEN1 subfamily. As to quaternary structure, interacts with PCNA. PCNA stimulates the nuclease activity without altering cleavage specificity. Mg(2+) is required as a cofactor.

Functionally, structure-specific nuclease with 5'-flap endonuclease and 5'-3' exonuclease activities involved in DNA replication and repair. During DNA replication, cleaves the 5'-overhanging flap structure that is generated by displacement synthesis when DNA polymerase encounters the 5'-end of a downstream Okazaki fragment. Binds the unpaired 3'-DNA end and kinks the DNA to facilitate 5' cleavage specificity. Cleaves one nucleotide into the double-stranded DNA from the junction in flap DNA, leaving a nick for ligation. Also involved in the base excision repair (BER) pathway. Acts as a genome stabilization factor that prevents flaps from equilibrating into structures that lead to duplications and deletions. Also possesses 5'-3' exonuclease activity on nicked or gapped double-stranded DNA. This chain is Flap endonuclease 1, found in Pyrobaculum calidifontis (strain DSM 21063 / JCM 11548 / VA1).